We begin with the raw amino-acid sequence, 200 residues long: Protein GrpE (200 aa).

Residues 1 to 11 (MTDNDGQKDFS) show a composition bias toward basic and acidic residues. Positions 1 to 43 (MTDNDGQKDFSEAAAENAGSKPGEPRVSKPYIMPDDPEETPSE) are disordered.

The protein belongs to the GrpE family. As to quaternary structure, homodimer.

The protein localises to the cytoplasm. Its function is as follows. Participates actively in the response to hyperosmotic and heat shock by preventing the aggregation of stress-denatured proteins, in association with DnaK and GrpE. It is the nucleotide exchange factor for DnaK and may function as a thermosensor. Unfolded proteins bind initially to DnaJ; upon interaction with the DnaJ-bound protein, DnaK hydrolyzes its bound ATP, resulting in the formation of a stable complex. GrpE releases ADP from DnaK; ATP binding to DnaK triggers the release of the substrate protein, thus completing the reaction cycle. Several rounds of ATP-dependent interactions between DnaJ, DnaK and GrpE are required for fully efficient folding. The chain is Protein GrpE from Afipia carboxidovorans (strain ATCC 49405 / DSM 1227 / KCTC 32145 / OM5) (Oligotropha carboxidovorans).